The following is a 562-amino-acid chain: Scaffold protein FimL (562 aa).

In terms of assembly, interacts with PilG and FimV.

It is found in the cytoplasm. Its function is as follows. Regulates multiple virulence functions including type IV pilus (T4P)-mediated assembly and twitching motility as well as cAMP-dependent virulence gene expression. Regulates intracellular cyclic AMP (cAMP) levels through the activation of adenylate cyclase CyaB. Also functions as a scaffold linking FimV and PilG at the pole, where type IV pilus (T4P), the Chp chemosensory system and the CyaB adenylate cyclase interact. This chain is Scaffold protein FimL (fimL), found in Pseudomonas aeruginosa (strain ATCC 15692 / DSM 22644 / CIP 104116 / JCM 14847 / LMG 12228 / 1C / PRS 101 / PAO1).